Consider the following 264-residue polypeptide: S-adenosylmethionine decarboxylase proenzyme (264 aa).

Residue serine 112 is the Schiff-base intermediate with substrate; via pyruvic acid of the active site. Serine 112 carries the post-translational modification Pyruvic acid (Ser); by autocatalysis. The active-site Proton acceptor; for processing activity is histidine 117. The active-site Proton donor; for catalytic activity is cysteine 140.

Belongs to the prokaryotic AdoMetDC family. Type 2 subfamily. Heterooctamer of four alpha and four beta chains arranged as a tetramer of alpha/beta heterodimers. Requires pyruvate as cofactor. Is synthesized initially as an inactive proenzyme. Formation of the active enzyme involves a self-maturation process in which the active site pyruvoyl group is generated from an internal serine residue via an autocatalytic post-translational modification. Two non-identical subunits are generated from the proenzyme in this reaction, and the pyruvate is formed at the N-terminus of the alpha chain, which is derived from the carboxyl end of the proenzyme. The post-translation cleavage follows an unusual pathway, termed non-hydrolytic serinolysis, in which the side chain hydroxyl group of the serine supplies its oxygen atom to form the C-terminus of the beta chain, while the remainder of the serine residue undergoes an oxidative deamination to produce ammonia and the pyruvoyl group blocking the N-terminus of the alpha chain.

The catalysed reaction is S-adenosyl-L-methionine + H(+) = S-adenosyl 3-(methylsulfanyl)propylamine + CO2. It participates in amine and polyamine biosynthesis; S-adenosylmethioninamine biosynthesis; S-adenosylmethioninamine from S-adenosyl-L-methionine: step 1/1. Catalyzes the decarboxylation of S-adenosylmethionine to S-adenosylmethioninamine (dcAdoMet), the propylamine donor required for the synthesis of the polyamines spermine and spermidine from the diamine putrescine. This chain is S-adenosylmethionine decarboxylase proenzyme, found in Citrobacter koseri (strain ATCC BAA-895 / CDC 4225-83 / SGSC4696).